The chain runs to 109 residues: Cell division protein ZapA (109 aa).

Positions 21-99 (PEQQEALNQA…IEQALLEQGK (79 aa)) form a coiled coil.

This sequence belongs to the ZapA family. Type 1 subfamily. Homodimer. Interacts with FtsZ.

It is found in the cytoplasm. In terms of biological role, activator of cell division through the inhibition of FtsZ GTPase activity, therefore promoting FtsZ assembly into bundles of protofilaments necessary for the formation of the division Z ring. It is recruited early at mid-cell but it is not essential for cell division. The protein is Cell division protein ZapA of Pectobacterium atrosepticum (strain SCRI 1043 / ATCC BAA-672) (Erwinia carotovora subsp. atroseptica).